A 311-amino-acid chain; its full sequence is tRNA dimethylallyltransferase (311 aa).

Position 13–20 (13–20 (GPTASGKT)) interacts with ATP. Residue 15-20 (TASGKT) coordinates substrate. 2 interaction with substrate tRNA regions span residues 38–41 (DSMQ) and 166–170 (QRVLR).

This sequence belongs to the IPP transferase family. Monomer. Mg(2+) serves as cofactor.

The catalysed reaction is adenosine(37) in tRNA + dimethylallyl diphosphate = N(6)-dimethylallyladenosine(37) in tRNA + diphosphate. Catalyzes the transfer of a dimethylallyl group onto the adenine at position 37 in tRNAs that read codons beginning with uridine, leading to the formation of N6-(dimethylallyl)adenosine (i(6)A). In Staphylococcus aureus (strain MRSA252), this protein is tRNA dimethylallyltransferase.